The following is a 401-amino-acid chain: Formate-dependent phosphoribosylglycinamide formyltransferase (401 aa).

Residues 22–23 and E82 contribute to the N(1)-(5-phospho-beta-D-ribosyl)glycinamide site; that span reads EL. Residues R115, K157, 162–167, 197–200, and E205 contribute to the ATP site; these read SSGKGQ and EGFI. Residues 120 to 315 form the ATP-grasp domain; sequence RLAAESLGLP…EFELHARAIL (196 aa). Residues E274 and E286 each contribute to the Mg(2+) site. N(1)-(5-phospho-beta-D-ribosyl)glycinamide-binding positions include D293, K362, and 369–370; that span reads RR.

The protein belongs to the PurK/PurT family. In terms of assembly, homodimer.

The enzyme catalyses N(1)-(5-phospho-beta-D-ribosyl)glycinamide + formate + ATP = N(2)-formyl-N(1)-(5-phospho-beta-D-ribosyl)glycinamide + ADP + phosphate + H(+). Its pathway is purine metabolism; IMP biosynthesis via de novo pathway; N(2)-formyl-N(1)-(5-phospho-D-ribosyl)glycinamide from N(1)-(5-phospho-D-ribosyl)glycinamide (formate route): step 1/1. Its function is as follows. Involved in the de novo purine biosynthesis. Catalyzes the transfer of formate to 5-phospho-ribosyl-glycinamide (GAR), producing 5-phospho-ribosyl-N-formylglycinamide (FGAR). Formate is provided by PurU via hydrolysis of 10-formyl-tetrahydrofolate. This chain is Formate-dependent phosphoribosylglycinamide formyltransferase, found in Cupriavidus taiwanensis (strain DSM 17343 / BCRC 17206 / CCUG 44338 / CIP 107171 / LMG 19424 / R1) (Ralstonia taiwanensis (strain LMG 19424)).